Consider the following 460-residue polypeptide: UDP-glycosyltransferase 74B1 (460 aa).

The active-site Proton acceptor is His22. Position 22 (His22) interacts with an anthocyanidin. Asp113 (charge relay) is an active-site residue. UDP-alpha-D-glucose contacts are provided by Thr135, Gln339, His354, Trp357, Asn358, Ser359, Glu362, Asp378, and Gln379.

The protein belongs to the UDP-glycosyltransferase family. In terms of tissue distribution, expressed in the vasculature, the apical meristems of roots, shoots and inflorescence, and the junction of organ or branches.

The enzyme catalyses (Z)-2-phenyl-1-thioacetohydroximate + UDP-alpha-D-glucose = (Z)-desulfoglucotropeolin + UDP. The catalysed reaction is a (Z)-omega-(methylsulfanyl)alkyl-thiohydroximate + UDP-alpha-D-glucose = an aliphatic (Z)-desulfo-glucosinolate + UDP. It catalyses the reaction (Z)-2-(indol-3-yl)-1-thioacetohydroximate + UDP-alpha-D-glucose = (Z)-indolylmethyl desulfoglucosinolate + UDP. In terms of biological role, involved in the biosynthesis of glucosinolate. In in vitro assay, may use phenylacetothiohydroximate (PATH), but not phenylacetic acid (PAA), indole-3-acetic acid (IAA) or salicylic acid (SA) as substrate. Specific for the thiohydroximate functional group and does not glucosylate the carboxylate group or a hydroxyl group. This is UDP-glycosyltransferase 74B1 (UGT74B1) from Arabidopsis thaliana (Mouse-ear cress).